The sequence spans 83 residues: Small ribosomal subunit protein bS16 (83 aa).

Belongs to the bacterial ribosomal protein bS16 family.

This chain is Small ribosomal subunit protein bS16, found in Pseudomonas putida (strain ATCC 700007 / DSM 6899 / JCM 31910 / BCRC 17059 / LMG 24140 / F1).